A 283-amino-acid chain; its full sequence is Extracellular metalloprotease MGG_08041 (283 aa).

The N-terminal stretch at 1–22 is a signal peptide; sequence MQINVVKTFLFALAASSVSALA. N55 carries an N-linked (GlcNAc...) asparagine glycan. H197 is a binding site for Zn(2+). The active site involves E198. H201 is a binding site for Zn(2+). A disulfide bridge connects residues C233 and C260.

Belongs to the peptidase M43B family.

It is found in the secreted. In terms of biological role, secreted metalloproteinase that allows assimilation of proteinaceous substrates. The polypeptide is Extracellular metalloprotease MGG_08041 (Pyricularia oryzae (strain 70-15 / ATCC MYA-4617 / FGSC 8958) (Rice blast fungus)).